A 185-amino-acid chain; its full sequence is Thioredoxin F2, chloroplastic (185 aa).

One can recognise a Thioredoxin domain in the interval 59-184 (RRIGSCVVRC…LLAAIEAARS (126 aa)). Active-site nucleophile residues include Cys109 and Cys112. The cysteines at positions 109 and 112 are disulfide-linked. Cys136 bears the S-glutathionyl cysteine; transient mark.

The protein belongs to the thioredoxin family. Plant F-type subfamily. Post-translationally, glutathionylation at Cys-136 decreases its ability to be reduced by ferredoxin-thioredoxin reductase and reduces its efficiency in activating target chloroplastic enzymes.

The protein localises to the plastid. Its subcellular location is the chloroplast stroma. In terms of biological role, probable thiol-disulfide oxidoreductase involved in the redox regulation of enzymes of both reductive pentose phosphate pathway (Calvin-Benson cycle) and oxidative pentose phosphate pathway. The polypeptide is Thioredoxin F2, chloroplastic (Arabidopsis thaliana (Mouse-ear cress)).